Reading from the N-terminus, the 429-residue chain is Adenylosuccinate synthetase (429 aa).

GTP contacts are provided by residues 12–18 and 40–42; these read GDEGKGK and GHT. Asp-13 (proton acceptor) is an active-site residue. Asp-13 and Gly-40 together coordinate Mg(2+). Residues 13 to 16, 38 to 41, Thr-129, Arg-143, Gln-223, Thr-238, and Arg-302 contribute to the IMP site; these read DEGK and NAGH. His-41 (proton donor) is an active-site residue. 298 to 304 contacts substrate; it reads VVTGRKR. Residues Arg-304, 330-332, and 412-414 each bind GTP; these read KLD and STS.

It belongs to the adenylosuccinate synthetase family. Homodimer. Mg(2+) serves as cofactor.

The protein resides in the cytoplasm. The catalysed reaction is IMP + L-aspartate + GTP = N(6)-(1,2-dicarboxyethyl)-AMP + GDP + phosphate + 2 H(+). It functions in the pathway purine metabolism; AMP biosynthesis via de novo pathway; AMP from IMP: step 1/2. In terms of biological role, plays an important role in the de novo pathway of purine nucleotide biosynthesis. Catalyzes the first committed step in the biosynthesis of AMP from IMP. The protein is Adenylosuccinate synthetase of Brucella ovis (strain ATCC 25840 / 63/290 / NCTC 10512).